The following is a 130-amino-acid chain: Small ribosomal subunit protein uS9 (130 aa).

This sequence belongs to the universal ribosomal protein uS9 family.

The protein is Small ribosomal subunit protein uS9 of Burkholderia ambifaria (strain MC40-6).